The primary structure comprises 347 residues: Photosystem II protein D1 (347 aa).

Transmembrane regions (helical) follow at residues Tyr32 to Val49, His121 to Phe136, and Trp145 to Ala159. His121 contacts chlorophyll a. Tyr129 provides a ligand contact to pheophytin a. [CaMn4O5] cluster contacts are provided by Asp173 and Glu192. Residues Phe200–Leu221 form a helical membrane-spanning segment. His201 is a chlorophyll a binding site. A quinone-binding positions include His218 and Ser267–Phe268. His218 provides a ligand contact to Fe cation. His275 lines the Fe cation pocket. Residues Phe277 to Leu291 form a helical membrane-spanning segment. [CaMn4O5] cluster contacts are provided by His335, Glu336, Asp345, and Ala347.

Belongs to the reaction center PufL/M/PsbA/D family. PSII is composed of 1 copy each of membrane proteins PsbA, PsbB, PsbC, PsbD, PsbE, PsbF, PsbH, PsbI, PsbJ, PsbK, PsbL, PsbM, PsbT, PsbX, PsbY, PsbZ, Psb30/Ycf12, at least 3 peripheral proteins of the oxygen-evolving complex and a large number of cofactors. It forms dimeric complexes. The D1/D2 heterodimer binds P680, chlorophylls that are the primary electron donor of PSII, and subsequent electron acceptors. It shares a non-heme iron and each subunit binds pheophytin, quinone, additional chlorophylls, carotenoids and lipids. D1 provides most of the ligands for the Mn4-Ca-O5 cluster of the oxygen-evolving complex (OEC). There is also a Cl(-1) ion associated with D1 and D2, which is required for oxygen evolution. The PSII complex binds additional chlorophylls, carotenoids and specific lipids. is required as a cofactor. In terms of processing, tyr-164 forms a radical intermediate that is referred to as redox-active TyrZ, YZ or Y-Z.

The protein localises to the plastid. It is found in the chloroplast thylakoid membrane. It carries out the reaction 2 a plastoquinone + 4 hnu + 2 H2O = 2 a plastoquinol + O2. In terms of biological role, photosystem II (PSII) is a light-driven water:plastoquinone oxidoreductase that uses light energy to abstract electrons from H(2)O, generating O(2) and a proton gradient subsequently used for ATP formation. It consists of a core antenna complex that captures photons, and an electron transfer chain that converts photonic excitation into a charge separation. The D1/D2 (PsbA/PsbD) reaction center heterodimer binds P680, the primary electron donor of PSII as well as several subsequent electron acceptors. The protein is Photosystem II protein D1 of Heterocapsa niei (Dinoflagellate).